A 118-amino-acid polypeptide reads, in one-letter code: Ribonuclease P protein component (118 aa).

The protein belongs to the RnpA family. Consists of a catalytic RNA component (M1 or rnpB) and a protein subunit.

The catalysed reaction is Endonucleolytic cleavage of RNA, removing 5'-extranucleotides from tRNA precursor.. Its function is as follows. RNaseP catalyzes the removal of the 5'-leader sequence from pre-tRNA to produce the mature 5'-terminus. It can also cleave other RNA substrates such as 4.5S RNA. The protein component plays an auxiliary but essential role in vivo by binding to the 5'-leader sequence and broadening the substrate specificity of the ribozyme. This is Ribonuclease P protein component from Shewanella amazonensis (strain ATCC BAA-1098 / SB2B).